We begin with the raw amino-acid sequence, 515 residues long: WUSCHEL-related homeobox 12 (515 aa).

Polar residues-rich tracts occupy residues 23-32 (QQQPDMNGNG) and 44-57 (TAATTGNGKPSLLS). Disordered stretches follow at residues 23–76 (QQQP…WNPR), 130–156 (NKLRAAGHHHHHGRAAALPRASAPPST), and 176–195 (LLAATSSSSSSSDRSSGSSK). Residues 62-71 (EGTRNPEPKP) are compositionally biased toward basic and acidic residues. The segment at residues 68-132 (EPKPRWNPRP…NRKSRTKNKL (65 aa)) is a DNA-binding region (homeobox; WUS-type). Residues 130–143 (NKLRAAGHHHHHGR) show a composition bias toward basic residues. Composition is skewed to low complexity over residues 144-156 (AAALPRASAPPST) and 177-195 (LAATSSSSSSSDRSSGSSK).

Belongs to the WUS homeobox family.

Its subcellular location is the nucleus. In terms of biological role, transcription factor which may be involved in developmental processes. The polypeptide is WUSCHEL-related homeobox 12 (WOX12) (Oryza sativa subsp. japonica (Rice)).